Here is a 517-residue protein sequence, read N- to C-terminus: 2-isopropylmalate synthase (517 aa).

The 263-residue stretch at 7–269 (VIIFDTTLRD…ETGIDTTQIV (263 aa)) folds into the Pyruvate carboxyltransferase domain. Positions 16, 204, 206, and 240 each coordinate Mn(2+). Residues 366-517 (LADKKREIFD…KPKAQGSGTI (152 aa)) form a required for the condensation reaction. Not required to bind substrate region. A regulatory domain region spans residues 395 to 517 (KFISQKISTE…KPKAQGSGTI (123 aa)).

It belongs to the alpha-IPM synthase/homocitrate synthase family. LeuA type 1 subfamily. Homodimer. Remains a homodimer in the presence of L-leucine. It depends on Mn(2+) as a cofactor.

It is found in the cytoplasm. The catalysed reaction is 3-methyl-2-oxobutanoate + acetyl-CoA + H2O = (2S)-2-isopropylmalate + CoA + H(+). It functions in the pathway amino-acid biosynthesis; L-leucine biosynthesis; L-leucine from 3-methyl-2-oxobutanoate: step 1/4. With respect to regulation, inhibited by 3-bromo substituents and Leu, the pathway end product. Functionally, catalyzes the condensation of the acetyl group of acetyl-CoA with 3-methyl-2-oxobutanoate (2-ketoisovalerate) to form 3-carboxy-3-hydroxy-4-methylpentanoate (2-isopropylmalate). Complements an E.coli deletion. This is 2-isopropylmalate synthase from Neisseria meningitidis serogroup B (strain ATCC BAA-335 / MC58).